A 177-amino-acid chain; its full sequence is uncharacterized protein (177 aa).

Transmembrane regions (helical) follow at residues 20 to 42, 62 to 84, 94 to 116, and 136 to 158; these read NLVS…LLAL, VVLW…VSLS, AMSS…GYFI, and GLLY…IIVA.

The protein resides in the cell membrane. This is an uncharacterized protein from Methanocaldococcus jannaschii (strain ATCC 43067 / DSM 2661 / JAL-1 / JCM 10045 / NBRC 100440) (Methanococcus jannaschii).